A 189-amino-acid chain; its full sequence is MTKLENPVLMATIGGAQGLRGEVRAKAYTADPSALGDYGHLHSMDGRSFEVLEIRETKNVVIVRFRGVNDRNAAEALNGLELYIERDNLPDEELEDDEFYYADLEGLEARDDKGASYGTVTGVFDFGAGDLLELKGPGKRPVLIPFSEASVLEIDLEAGTLLIDPLAAGLVDDPEELSKFTADKPKKKK.

The 83-residue stretch at 95–177 (EDDEFYYADL…AGLVDDPEEL (83 aa)) folds into the PRC barrel domain.

This sequence belongs to the RimM family. Binds ribosomal protein uS19.

The protein localises to the cytoplasm. Its function is as follows. An accessory protein needed during the final step in the assembly of 30S ribosomal subunit, possibly for assembly of the head region. Essential for efficient processing of 16S rRNA. May be needed both before and after RbfA during the maturation of 16S rRNA. It has affinity for free ribosomal 30S subunits but not for 70S ribosomes. This Rhizobium leguminosarum bv. trifolii (strain WSM2304) protein is Ribosome maturation factor RimM.